Here is an 86-residue protein sequence, read N- to C-terminus: Short neurotoxin homolog NTL4 (86 aa).

The signal sequence occupies residues M1–T21. Cystine bridges form between C24/C45, C38/C63, C67/C78, and C79/C84.

This sequence belongs to the three-finger toxin family. Short-chain subfamily. Orphan group III sub-subfamily. In terms of tissue distribution, expressed by the venom gland.

The protein localises to the secreted. In Bungarus multicinctus (Many-banded krait), this protein is Short neurotoxin homolog NTL4.